We begin with the raw amino-acid sequence, 164 residues long: UPF0178 protein RPB_3201 (164 aa).

This sequence belongs to the UPF0178 family.

The chain is UPF0178 protein RPB_3201 from Rhodopseudomonas palustris (strain HaA2).